We begin with the raw amino-acid sequence, 181 residues long: Oleosin (181 aa).

The disordered stretch occupies residues 1-28 (TTTTYDRHFTTTQPHYRQDDRSRYDQQT). Residues 1 to 38 (TTTTYDRHFTTTQPHYRQDDRSRYDQQTHSQSTSRTLA) form a polar region. Residues 16–26 (YRQDDRSRYDQ) show a composition bias toward basic and acidic residues. 3 consecutive transmembrane segments (helical) span residues 38-58 (AIIA…LTFI), 69-89 (PLFV…GLAV), and 90-110 (TGFL…SYLF). The hydrophobic stretch occupies residues 39 to 110 (IIALLPVGGI…TGLSSLSYLF (72 aa)). Residues 155–181 (EMGDQGQVGVHAQVGGGKEGRKSGDRT) form a disordered region. Residues 158–167 (DQGQVGVHAQ) are compositionally biased toward low complexity. Residues 172–181 (KEGRKSGDRT) are compositionally biased toward basic and acidic residues.

It belongs to the oleosin family.

The protein localises to the lipid droplet. It is found in the membrane. May have a structural role to stabilize the lipid body during desiccation of the seed by preventing coalescence of the oil. Probably interacts with both lipid and phospholipid moieties of lipid bodies. May also provide recognition signals for specific lipase anchorage in lipolysis during seedling growth. The protein is Oleosin of Helianthus annuus (Common sunflower).